A 120-amino-acid chain; its full sequence is Large ribosomal subunit protein uL18 (120 aa).

This sequence belongs to the universal ribosomal protein uL18 family. Part of the 50S ribosomal subunit; part of the 5S rRNA/L5/L18/L25 subcomplex. Contacts the 5S and 23S rRNAs.

Functionally, this is one of the proteins that bind and probably mediate the attachment of the 5S RNA into the large ribosomal subunit, where it forms part of the central protuberance. The polypeptide is Large ribosomal subunit protein uL18 (Bacillus cytotoxicus (strain DSM 22905 / CIP 110041 / 391-98 / NVH 391-98)).